The primary structure comprises 165 residues: Putative defense protein Hdd11 (165 aa).

The N-terminal stretch at M1–G17 is a signal peptide. Residues Y18 to S165 enclose the Reelin domain. Residues C27 and C104 are joined by a disulfide bond.

The protein belongs to the insect defense protein family.

The protein resides in the secreted. Functionally, as this protein is expressed upon bacterial infection, it may have antimicrobial activity. This chain is Putative defense protein Hdd11, found in Hyphantria cunea (Fall webworm moth).